Here is a 311-residue protein sequence, read N- to C-terminus: tRNA-cytidine(32) 2-sulfurtransferase (311 aa).

A PP-loop motif motif is present at residues 45 to 50 (SGGKDS). The [4Fe-4S] cluster site is built by Cys120, Cys123, and Cys211.

This sequence belongs to the TtcA family. In terms of assembly, homodimer. Mg(2+) is required as a cofactor. [4Fe-4S] cluster serves as cofactor.

It localises to the cytoplasm. It carries out the reaction cytidine(32) in tRNA + S-sulfanyl-L-cysteinyl-[cysteine desulfurase] + AH2 + ATP = 2-thiocytidine(32) in tRNA + L-cysteinyl-[cysteine desulfurase] + A + AMP + diphosphate + H(+). The protein operates within tRNA modification. Functionally, catalyzes the ATP-dependent 2-thiolation of cytidine in position 32 of tRNA, to form 2-thiocytidine (s(2)C32). The sulfur atoms are provided by the cysteine/cysteine desulfurase (IscS) system. This is tRNA-cytidine(32) 2-sulfurtransferase from Shewanella halifaxensis (strain HAW-EB4).